We begin with the raw amino-acid sequence, 72 residues long: ATP synthase protein 8 (72 aa).

The helical transmembrane segment at 16–36 threads the bilayer; sequence WTLIALFLLFSFLVVSVLPAV.

The protein belongs to the ATPase protein 8 family. In terms of assembly, F-type ATPases have 2 components, CF(1) - the catalytic core - and CF(0) - the membrane proton channel.

It is found in the mitochondrion membrane. Its function is as follows. Mitochondrial membrane ATP synthase (F(1)F(0) ATP synthase or Complex V) produces ATP from ADP in the presence of a proton gradient across the membrane which is generated by electron transport complexes of the respiratory chain. F-type ATPases consist of two structural domains, F(1) - containing the extramembraneous catalytic core and F(0) - containing the membrane proton channel, linked together by a central stalk and a peripheral stalk. During catalysis, ATP synthesis in the catalytic domain of F(1) is coupled via a rotary mechanism of the central stalk subunits to proton translocation. Part of the complex F(0) domain. Minor subunit located with subunit a in the membrane. This chain is ATP synthase protein 8 (MTATP8), found in Metridium senile (Brown sea anemone).